The following is a 728-amino-acid chain: Dynamin-like protein 1 (728 aa).

The tract at residues 1 to 119 (MKELFQKIWQ…ILQEKVQSID (119 aa)) is assembly domain, required for tetramerization. The Dynamin-type G domain occupies 159–442 (QNLEFNIAIT…LYAGEKSKIA (284 aa)). The G1 motif stretch occupies residues 169 to 176 (GVMNAGKS). Residue 171-177 (MNAGKSS) participates in GDP binding. Positions 195–196 (ET) are G2 motif. Residues 298 to 301 (DTPG) are G3 motif. Residues 358-361 (TKAD) are G4 motif. Lysine 359 lines the GDP pocket. Position 388 (glutamate 388) is a region of interest, G5 motif. Residue 400 to 402 (SAK) coordinates GDP. Residues 470–695 (ENKQGVSEEN…LESLEKVLQS (226 aa)) are required for liposome binding but not for tetramerization.

It belongs to the TRAFAC class dynamin-like GTPase superfamily. Dynamin/Fzo/YdjA family. Forms a 2:2 heterotetramer with DLP1. DLP2 forms a central back-to-back dimer flanked on each side by a DLP1 subunit. In the crystal structures the 2 DLP1 subunits are in very different conformations.

The protein localises to the cytoplasm. The protein resides in the cytosol. It carries out the reaction GTP + H2O = GDP + phosphate + H(+). In terms of biological role, the heterotetrameric DLP1(2)-DLP2(2) complex tethers liposomes and may mediate their fusion. Initial binding is probably mediated by DLP1, while DLP2 couples DLP1 subunits and increases the effective reach of the complex up to 45 nm. The role of the nucleotide is unknown. This subunit alone weakly binds to liposomes; GTP, GDP, GMPPCP and GMPPNP do not change heterotetramer binding. Tetramerization is required for GTPase activity, suggesting the GTPase domains (dynamin-type G) from DLP1 and DLP2 must dimerize to reconstitute the GTPase active site. The polypeptide is Dynamin-like protein 1 (Campylobacter jejuni subsp. jejuni serotype O:23/36 (strain 81-176)).